Reading from the N-terminus, the 86-residue chain is Myosuppressin (86 aa).

The signal sequence occupies residues 1-18 (MAIFCNNVLAALPTQCNP). A propeptide spanning residues 19 to 70 (GFLDDLPPRIRKVCVALSRIYELGSEMESYIGDKENHITGFHESIPLLDSGV) is cleaved from the precursor. Gln-73 carries the post-translational modification Pyrrolidone carboxylic acid. A Phenylalanine amide modification is found at Phe-82.

It is found in the secreted. Functionally, myoinhibiting neuropeptide. The chain is Myosuppressin from Apis mellifera (Honeybee).